Here is a 527-residue protein sequence, read N- to C-terminus: Bifunctional purine biosynthesis protein PurH (527 aa).

The MGS-like domain occupies 1-149 (MASDFLPVRR…KNFARVAVAT (149 aa)).

Belongs to the PurH family.

The catalysed reaction is (6R)-10-formyltetrahydrofolate + 5-amino-1-(5-phospho-beta-D-ribosyl)imidazole-4-carboxamide = 5-formamido-1-(5-phospho-D-ribosyl)imidazole-4-carboxamide + (6S)-5,6,7,8-tetrahydrofolate. It carries out the reaction IMP + H2O = 5-formamido-1-(5-phospho-D-ribosyl)imidazole-4-carboxamide. The protein operates within purine metabolism; IMP biosynthesis via de novo pathway; 5-formamido-1-(5-phospho-D-ribosyl)imidazole-4-carboxamide from 5-amino-1-(5-phospho-D-ribosyl)imidazole-4-carboxamide (10-formyl THF route): step 1/1. Its pathway is purine metabolism; IMP biosynthesis via de novo pathway; IMP from 5-formamido-1-(5-phospho-D-ribosyl)imidazole-4-carboxamide: step 1/1. This Xanthomonas oryzae pv. oryzae (strain MAFF 311018) protein is Bifunctional purine biosynthesis protein PurH.